The sequence spans 358 residues: Ethanol acetyltransferase 1 (358 aa).

The AB hydrolase-1 domain occupies 59–166; sequence PIVFIHGLFG…NAPINQPHIS (108 aa). Residues serine 132, aspartate 156, and histidine 305 each act as charge relay system in the active site.

It belongs to the AB hydrolase superfamily.

The protein resides in the mitochondrion. It carries out the reaction ethanol + acetyl-CoA = ethyl acetate + CoA. It catalyses the reaction acetyl-CoA + H2O = acetate + CoA + H(+). The enzyme catalyses ethyl acetate + H2O = ethanol + acetate + H(+). Functionally, alcohol acetyltransferase that catalyzes the synthesis of ethyl acetate from ethanol and acetyl-CoA. Can also function as a thioesterase by hydrolyzing acetyl-CoA in the absence of ethanol, as well as esterase hydrolyzing ethyl acetate. The protein is Ethanol acetyltransferase 1 (EAT1) of Eremothecium cymbalariae (strain CBS 270.75 / DBVPG 7215 / KCTC 17166 / NRRL Y-17582) (Yeast).